Consider the following 475-residue polypeptide: UDP-N-acetylmuramate--L-alanine ligase (475 aa).

Position 125–131 (125–131 (GTHGKTT)) interacts with ATP.

It belongs to the MurCDEF family.

Its subcellular location is the cytoplasm. The enzyme catalyses UDP-N-acetyl-alpha-D-muramate + L-alanine + ATP = UDP-N-acetyl-alpha-D-muramoyl-L-alanine + ADP + phosphate + H(+). It participates in cell wall biogenesis; peptidoglycan biosynthesis. Cell wall formation. The chain is UDP-N-acetylmuramate--L-alanine ligase from Haemophilus influenzae (strain 86-028NP).